Consider the following 216-residue polypeptide: 2,5-diamino-6-ribosylamino-4(3H)-pyrimidinone 5'-phosphate reductase (216 aa).

Residues T51, D55, 79 to 82 (SMAR), V126, and 148 to 151 (GSTL) contribute to the NADP(+) site.

The protein belongs to the HTP reductase family. As to quaternary structure, homodimer.

It catalyses the reaction 2,5-diamino-6-(1-D-ribitylamino)pyrimidin-4(3H)-one 5'-phosphate + NADP(+) = 2,5-diamino-6-(1-D-ribosylamino)pyrimidin-4(3H)-one 5'-phosphate + NADPH + H(+). The enzyme catalyses 2,5-diamino-6-(1-D-ribitylamino)pyrimidin-4(3H)-one 5'-phosphate + NAD(+) = 2,5-diamino-6-(1-D-ribosylamino)pyrimidin-4(3H)-one 5'-phosphate + NADH + H(+). It participates in cofactor biosynthesis; riboflavin biosynthesis. Functionally, catalyzes an early step in riboflavin biosynthesis, the NADPH-dependent reduction of the ribose side chain of 2,5-diamino-6-ribosylamino-4(3H)-pyrimidinone 5'-phosphate, yielding 2,5-diamino-6-ribitylamino-4(3H)-pyrimidinone 5'-phosphate. The protein is 2,5-diamino-6-ribosylamino-4(3H)-pyrimidinone 5'-phosphate reductase of Methanothermobacter thermautotrophicus (strain ATCC 29096 / DSM 1053 / JCM 10044 / NBRC 100330 / Delta H) (Methanobacterium thermoautotrophicum).